The primary structure comprises 309 residues: Testis-expressed protein 264 homolog (309 aa).

The Lumenal segment spans residues Met-1–Asp-3. A helical; Signal-anchor for type III membrane protein transmembrane segment spans residues Leu-4–Phe-24. Over Ala-25–Glu-309 the chain is Cytoplasmic. The disordered stretch occupies residues Pro-193–Glu-309. A compositionally biased stretch (low complexity) spans Ala-208–Ser-225. Ser-238 and Ser-243 each carry phosphoserine. The span at Gly-250–Tyr-262 shows a compositional bias: basic and acidic residues. Positions Ser-263–Phe-272 are enriched in low complexity. The LIR motif motif lies at Phe-272–Leu-275.

As to quaternary structure, interacts (via the LIR motif) with ATG8 family proteins MAP1LC3A, MAP1LC3B, GABARAP and GABARAPL1. Interacts with VCP/p97; bridging VCP/p97 to covalent DNA-protein cross-links (DPCs). Interacts with TOP1 (when sumoylated).

The protein localises to the endoplasmic reticulum membrane. It is found in the cytoplasmic vesicle. The protein resides in the autophagosome. Its subcellular location is the cytoplasm. It localises to the cytosol. The protein localises to the nucleus. It is found in the chromosome. In terms of biological role, major reticulophagy (also called ER-phagy) receptor that acts independently of other candidate reticulophagy receptors to remodel subdomains of the endoplasmic reticulum into autophagosomes upon nutrient stress, which then fuse with lysosomes for endoplasmic reticulum turnover. The ATG8-containing isolation membrane (IM) cradles a tubular segment of TEX264-positive ER near a three-way junction, allowing the formation of a synapse of 2 juxtaposed membranes with trans interaction between the TEX264 and ATG8 proteins. Expansion of the IM would extend the capture of ER, possibly through a 'zipper-like' process involving continued trans TEX264-ATG8 interactions, until poorly understood mechanisms lead to the fission of relevant membranes and, ultimately, autophagosomal membrane closure. Also involved in the repair of covalent DNA-protein cross-links (DPCs) during DNA synthesis: acts by bridging VCP/p97 to covalent DNA-protein cross-links (DPCs) and initiating resolution of DPCs by SPRTN. In Mus musculus (Mouse), this protein is Testis-expressed protein 264 homolog.